Here is a 463-residue protein sequence, read N- to C-terminus: POU domain, class 2, transcription factor 2 (463 aa).

5 disordered regions span residues 1-87, 159-182, 259-282, 341-376, and 393-463; these read MVHS…QPHL, QPRA…EEPS, SSLP…GRRR, PCSA…LSQA, and TLHP…PYQP. The segment covering 12–37 has biased composition (basic and acidic residues); it reads RMSKPLEAEKQSLDSPSEHTDTERNG. The span at 41 to 60 shows a compositional bias: polar residues; it reads NHQNPQNKASPFSVSPTGPS. Positions 75–85 are enriched in pro residues; the sequence is AAPPPPQPAQP. The 75-residue stretch at 179 to 253 folds into the POU-specific domain; it reads EEPSDLEELE…LLEKWLNDAE (75 aa). The span at 259–272 shows a compositional bias: low complexity; sequence SSLPSPNQLSSPSL. A DNA-binding region (homeobox) is located at residues 281 to 340; the sequence is RRKKRTSIETNVRFALEKSFLANQKPTSEEILLIAEQLHMEKEVIRVWFCNRRQKEKRIN. The tract at residues 373–394 is leucine-zipper; sequence LSQASSSLSTTVTTLSSAVGTL. Residues 400-409 show a composition bias toward gly residues; the sequence is AGGGGGGGGA.

This sequence belongs to the POU transcription factor family. Class-2 subfamily. Interacts with NR3C1, AR and PGR. Interacts with POU2AF1; the interaction increases POU2F2 transactivation activity. In terms of tissue distribution, highest in B cells, but also present in brain (neuronal and glial cells), intestine, kidney, and testes. As to expression, expressed at higher levels in B-cells than in neuronal cells. Expressed in neuronal cell lines and brain, but not dorsal root ganglia. In terms of tissue distribution, expressed at lower levels in neuronal cells than in B cells. As to expression, expressed in neuronal cell lines, and at lower levels in neuroblastoma and dorsal root ganglia. Widely expressed in the developing nervous system but expression is confined to very specific regions in the adult brain, it is expressed at a lower level in B cells. In terms of tissue distribution, either absent in, or expressed at very low levels in neuronal cells and brain. As to expression, expressed in all tissues tested: mammary gland, liver, spleen, lung, kidney intestine, uterus and ovary of a virgin mouse. Levels of isoform OCT2.7 are highest in spleen and lung. In mammary gland, expression is localized to the alveolus epithelial cells.

It localises to the cytoplasm. It is found in the nucleus. Transactivation activity is enhanced by transcriptional coactivator POU2AF1. In terms of biological role, transcription factor that specifically binds to the octamer motif (5'-ATTTGCAT-3'). Regulates IL6 expression in B cells with POU2AF1. Regulates transcription in a number of tissues in addition to activating immunoglobulin gene expression. Modulates transcription transactivation by NR3C1, AR and PGR. Functionally, activates octamer-containing promoters. Its function is as follows. Represses some promoters and activate others. Represses some promoters and activate others. Activates the U2 small nuclear RNA (snRNA) promoter. In terms of biological role, unable to bind to the octamer motif, but can still activate the beta-casein gene promoter at low levels. This is POU domain, class 2, transcription factor 2 from Mus musculus (Mouse).